A 460-amino-acid polypeptide reads, in one-letter code: Cysteine--tRNA ligase (460 aa).

Cys-27 provides a ligand contact to Zn(2+). The 'HIGH' region signature appears at 29–39 (PTVYDDAHLGH). Residues Cys-202, His-227, and Glu-231 each contribute to the Zn(2+) site. A 'KMSKS' region motif is present at residues 259–263 (KMSKS). Lys-262 contacts ATP.

Belongs to the class-I aminoacyl-tRNA synthetase family. Monomer. Zn(2+) is required as a cofactor.

Its subcellular location is the cytoplasm. The enzyme catalyses tRNA(Cys) + L-cysteine + ATP = L-cysteinyl-tRNA(Cys) + AMP + diphosphate. The polypeptide is Cysteine--tRNA ligase (Campylobacter lari (strain RM2100 / D67 / ATCC BAA-1060)).